A 474-amino-acid chain; its full sequence is PTS system N-acetylmuramic acid-specific EIIBC component (474 aa).

The 89-residue stretch at 1–89 (MAKEISSELL…SELLGDAPVQ (89 aa)) folds into the PTS EIIB type-1 domain. The Cytoplasmic portion of the chain corresponds to 1-123 (MAKEISSELL…LAKFATIFTP (123 aa)). Cys-29 acts as the Phosphocysteine intermediate; for EIIB activity in catalysis. The PTS EIIC type-1 domain occupies 115–474 (AKFATIFTPL…LFGCRNVNLD (360 aa)). Residues 124-144 (LIPGFIAAGLLLGIATLIATV) traverse the membrane as a helical segment. Topologically, residues 145–157 (MHVPADAQGTLPD) are periplasmic. Residues 158-178 (ALNFMKVFSKGLFTFLVILVG) traverse the membrane as a helical segment. Residues 179–180 (YN) are Cytoplasmic-facing. A helical transmembrane segment spans residues 181–201 (AAQAFGGTGVNGAIIAALFLL). At 202–217 (GYNPAATTGYYAGFHD) the chain is on the periplasmic side. A helical transmembrane segment spans residues 218-238 (FFGLPIDPRGNIIGVLIAAWA). At 239-260 (CARIEGMVRRFMPDDLDMLLTS) the chain is on the cytoplasmic side. The helical transmembrane segment at 261–281 (LITLLITATLAYLIIMPLGGW) threads the bilayer. The Periplasmic segment spans residues 282 to 301 (LFEGMSWLFMHLNSNPFGCA). The helical transmembrane segment at 302–322 (VLAGLFLIAVVFGVHQGFIPV) threads the bilayer. Residues 323-334 (YLALMDSQGFNS) are Cytoplasmic-facing. The helical transmembrane segment at 335–355 (LFPILSMAGAGQVGAALALYW) threads the bilayer. The Periplasmic portion of the chain corresponds to 356-368 (RAQPHSALRSQVR). The helical transmembrane segment at 369–389 (GAIIPGLLGVGEPLIYGVTLP) threads the bilayer. The Cytoplasmic portion of the chain corresponds to 390-393 (RMKP). The chain crosses the membrane as a helical span at residues 394-414 (FVTACLGGAAGGLFIGLIAWW). The Periplasmic segment spans residues 415–440 (GLPMGLNSAFGPSGLVALPLMTSAQG). A helical transmembrane segment spans residues 441-461 (ILPAMAVYAGGILVAWVCGFI). Topologically, residues 462–474 (FTTLFGCRNVNLD) are cytoplasmic.

It is found in the cell inner membrane. It carries out the reaction N-acetyl-beta-D-muramate(out) + N(pros)-phospho-L-histidyl-[protein] = N-acetyl-beta-D-muramate 6-phosphate(in) + L-histidyl-[protein]. Its function is as follows. The phosphoenolpyruvate-dependent sugar phosphotransferase system (sugar PTS), a major carbohydrate active transport system, catalyzes the phosphorylation of incoming sugar substrates concomitantly with their translocation across the cell membrane. This system is involved in N-acetylmuramic acid (MurNAc) transport, yielding cytoplasmic MurNAc-6-P. Is also able to take up anhydro-N-acetylmuramic acid (anhMurNAc), but cannot phosphorylate the carbon 6, probably because of the 1,6-anhydro ring. This chain is PTS system N-acetylmuramic acid-specific EIIBC component (murP), found in Shigella flexneri.